Consider the following 166-residue polypeptide: Myosin regulatory light chain 2, ventricular/cardiac muscle isoform (166 aa).

Position 2 is a n,N,N-trimethylalanine (Ala-2). Asn-14 carries the deamidated asparagine modification. Residue Ser-15 is modified to Phosphoserine; by ZIPK/DAPK3. Phosphoserine is present on Ser-19. 3 consecutive EF-hand domains span residues 24 to 59 (TQIQ…LGRV), 94 to 129 (DPEE…QAER), and 130 to 165 (FSKE…GEEK). Residues Asp-37, Asn-39, Asp-41, and Asp-48 each contribute to the Ca(2+) site. The residue at position 52 (Thr-52) is a Phosphothreonine.

As to quaternary structure, myosin is a hexamer of 2 heavy chains and 4 light chains. Interacts with MYOC. Post-translationally, N-terminus is methylated by METTL11A/NTM1. In terms of processing, phosphorylated by MYLK3 and MYLK2; promotes cardiac muscle contraction and function. Dephosphorylated by PPP1CB complexed to PPP1R12B. The phosphorylated form in adult is expressed as gradients across the heart from endocardium (low phosphorylation) to epicardium (high phosphorylation); regulates cardiac torsion and workload distribution. As to expression, highly expressed in type I muscle fibers.

It localises to the cytoplasm. The protein localises to the myofibril. It is found in the sarcomere. Its subcellular location is the a band. Contractile protein that plays a role in heart development and function. Following phosphorylation, plays a role in cross-bridge cycling kinetics and cardiac muscle contraction by increasing myosin lever arm stiffness and promoting myosin head diffusion; as a consequence of the increase in maximum contraction force and calcium sensitivity of contraction force. These events altogether slow down myosin kinetics and prolong duty cycle resulting in accumulated myosins being cooperatively recruited to actin binding sites to sustain thin filament activation as a means to fine-tune myofilament calcium sensitivity to force. During cardiogenesis plays an early role in cardiac contractility by promoting cardiac myofibril assembly. This chain is Myosin regulatory light chain 2, ventricular/cardiac muscle isoform, found in Homo sapiens (Human).